A 593-amino-acid polypeptide reads, in one-letter code: DNA mismatch repair protein MutL (593 aa).

Belongs to the DNA mismatch repair MutL/HexB family.

Functionally, this protein is involved in the repair of mismatches in DNA. It is required for dam-dependent methyl-directed DNA mismatch repair. May act as a 'molecular matchmaker', a protein that promotes the formation of a stable complex between two or more DNA-binding proteins in an ATP-dependent manner without itself being part of a final effector complex. The protein is DNA mismatch repair protein MutL of Leptospira interrogans serogroup Icterohaemorrhagiae serovar copenhageni (strain Fiocruz L1-130).